A 203-amino-acid polypeptide reads, in one-letter code: Secreted RxLR effector protein RXLR-C28 (203 aa).

A signal peptide spans 1–24; sequence MKAVKLTAAVVVLFMAPYVPITSS. An N-linked (GlcNAc...) asparagine glycan is attached at asparagine 32. Residues 37–40 carry the RxLR motif; it reads RHLR. N-linked (GlcNAc...) asparagine glycosylation occurs at asparagine 193.

The protein belongs to the RxLR effector family.

The protein resides in the secreted. Its subcellular location is the host cytoplasm. Functionally, secreted effector that does not suppress pattern-triggered immunity (PTI) in plant host. This chain is Secreted RxLR effector protein RXLR-C28, found in Plasmopara halstedii (Downy mildew of sunflower).